Consider the following 161-residue polypeptide: Cytochrome c-type biogenesis protein CcmE (161 aa).

Residues Met1–Arg8 lie on the Cytoplasmic side of the membrane. A helical; Signal-anchor for type II membrane protein membrane pass occupies residues Leu9–Ala29. Residues Leu30–Lys161 are Periplasmic-facing. His131 and Tyr135 together coordinate heme. Residues Glu142 to Lys161 are disordered. The span at Thr147–Lys161 shows a compositional bias: basic and acidic residues.

Belongs to the CcmE/CycJ family.

It is found in the cell inner membrane. Its function is as follows. Heme chaperone required for the biogenesis of c-type cytochromes. Transiently binds heme delivered by CcmC and transfers the heme to apo-cytochromes in a process facilitated by CcmF and CcmH. The chain is Cytochrome c-type biogenesis protein CcmE from Shewanella frigidimarina (strain NCIMB 400).